The sequence spans 433 residues: Keratin, type I cytoskeletal 47 kDa (433 aa).

Positions 1 to 73 (MSYSTRSISQ…AFNVSVTSNN (73 aa)) are head. The tract at residues 74-109 (GKETMQNLNDRLANYLDRVRSLEQANHELELKIREY) is coil 1A. An IF rod domain is found at 74-385 (GKETMQNLND…RLLEGEDTRF (312 aa)). The interval 110-127 (LDKKAAVGSLDYSGYYNT) is linker 1. The tract at residues 128–219 (INLLRSQIND…KNHEEELAVV (92 aa)) is coil 1B. The tract at residues 220–242 (RSSARGNVDVQVDSAPPVDLAQI) is linker 12. A coil 2 region spans residues 243 to 381 (MADVRSQYES…ATYRRLLEGE (139 aa)). The interval 382 to 433 (DTRFSQTETQKAVTIVSKEQSSSSIKKVKTVIEEVVDGKVVSSRVEELTETS) is tail.

It belongs to the intermediate filament family. Heterotetramer of two type I and two type II keratins.

The protein is Keratin, type I cytoskeletal 47 kDa (xk70a) of Xenopus laevis (African clawed frog).